A 219-amino-acid polypeptide reads, in one-letter code: Poxin (219 aa).

Histidine 17 serves as the catalytic Proton donor. The active-site Shared with catalytic histidine of dimeric partner is tyrosine 138. Lysine 142 acts as the Proton acceptor; shared with catalytic histidine of dimeric partner in catalysis.

The protein belongs to the poxin family. In terms of assembly, homodimer.

It catalyses the reaction 2',3'-cGAMP + H2O = Gp(2'-5')Ap(3') + H(+). Functionally, nuclease that is responsible for viral evasion of host cGAS-STING innate immunity. Cleaves 2',3'-cGAMP which is produced by host cGAS following recognition of cytosolic DNA and blocks the subsequent 2',3'-cGAMP-mediated activation of TMEM173/STING, which normally spreads to adjacent cells and activates the interferon and NF-kappa-B immune responses. The chain is Poxin (OPG188) from Bos taurus (Bovine).